We begin with the raw amino-acid sequence, 410 residues long: Cytochrome P450 monooxygenase mpsF (410 aa).

Cys355 serves as a coordination point for heme.

It belongs to the cytochrome P450 family. It depends on heme as a cofactor.

It functions in the pathway secondary metabolite biosynthesis. Its function is as follows. Cytochrome P450 monooxygenase; part of the gene cluster that mediates the biosynthesis of macrophasetins, 3-decalinoyltetramic acids (DTAs) which feature a tetramate (pyrrolidine-2,4-dione) unit connected to a decalin fragment and that have potent bioactivities. The PKS-NRPS mpsA together with its associated enoylreductase partner mpsG incorporate one unit of acetyl-CoA, seven units of malonyl-CoA, and one unit of L-alanine to assemble the linear tetramic acid intermediate corresponding to the backbone of macrophasetins. Without the Diels-Alderase mpsD, the mpsA/G product can undergo the non-enzymatic intramolecular Diels-Alder (IMDA) reaction to generate both macrophasetin A and macrophasetin B. Catalyzed by mpsD, the linear tetramic acid intermediate is thoroughly converted to macrophasetin A via the endo-IMDA reaction in a regioselective and stereoselective manner. Finally, the cytochrome P450 monooxygenase mpsF catalyzes the hydroxylation at C20 to yield the end product macrophasetin C. This is Cytochrome P450 monooxygenase mpsF from Macrophomina phaseolina (strain MS6) (Charcoal rot fungus).